The following is a 513-amino-acid chain: Glycogen synthase (513 aa).

K47 is a binding site for ADP-alpha-D-glucose.

This sequence belongs to the glycosyltransferase 1 family. Bacterial/plant glycogen synthase subfamily.

The catalysed reaction is [(1-&gt;4)-alpha-D-glucosyl](n) + ADP-alpha-D-glucose = [(1-&gt;4)-alpha-D-glucosyl](n+1) + ADP + H(+). Its pathway is glycan biosynthesis; glycogen biosynthesis. Functionally, synthesizes alpha-1,4-glucan chains using ADP-glucose. The protein is Glycogen synthase of Pseudomonas aeruginosa (strain ATCC 15692 / DSM 22644 / CIP 104116 / JCM 14847 / LMG 12228 / 1C / PRS 101 / PAO1).